The primary structure comprises 393 residues: Elongation factor Tu (393 aa).

The tr-type G domain maps to Lys-10 to Val-203. A G1 region spans residues Gly-19 to Thr-26. Gly-19–Thr-26 is a binding site for GTP. Thr-26 contributes to the Mg(2+) binding site. The interval Gly-60–Ser-64 is G2. Residues Asp-81–Gly-84 form a G3 region. GTP is bound by residues Asp-81–His-85 and Asn-136–Asp-139. The interval Asn-136–Asp-139 is G4. The G5 stretch occupies residues Ser-173–Leu-175.

It belongs to the TRAFAC class translation factor GTPase superfamily. Classic translation factor GTPase family. EF-Tu/EF-1A subfamily. In terms of assembly, monomer.

The protein localises to the cytoplasm. The enzyme catalyses GTP + H2O = GDP + phosphate + H(+). Its function is as follows. GTP hydrolase that promotes the GTP-dependent binding of aminoacyl-tRNA to the A-site of ribosomes during protein biosynthesis. This is Elongation factor Tu from Pelodictyon phaeoclathratiforme (strain DSM 5477 / BU-1).